A 359-amino-acid polypeptide reads, in one-letter code: NADPH HC-toxin reductase 2 (359 aa).

NADP(+)-binding positions include Arg39, 67 to 68 (DL), 87 to 89 (VAT), Tyr177, Lys181, 206 to 209 (LGLV), and Thr221. Residue Lys181 is the Proton donor of the active site.

This sequence belongs to the NAD(P)-dependent epimerase/dehydratase family.

In tandem with Hm1, NADPH-dependent HC toxin reductase (HCTR), which inactivates HC toxin, a cyclic tetrapeptide produced by the fungus Cochliobolus carbonum to permit infection and acting as an inhibitor of host histone deacetylases (HDACs), thus conferring resistance against C.carbonum race 1 in resistant cultivars (e.g. cv. B73 and cv. Wisconsin 22). Catalyzes the production of 8-hydroxy derivative of HC-toxin via the reduction of the 8-keto group of 2-amino-9,10-epoxy-8-oxo-decanoic acid, an amino acid of the HC-toxin. The chain is NADPH HC-toxin reductase 2 from Zea mays (Maize).